The primary structure comprises 162 residues: MKPIKTYDIKEEELAKTAYATIKTNKGNITLELFYKDAPQAVSNFVTLAKEGFYNGLNFHRVIAGFVAQGGCPYGTGTGGPEHRIKCEVAHNPNKHQRGSISMAHAGRDTGGSQFFLCFVDLPHLDGEHTVFGKITSAESLSVLDKIKQGDIIESVVFSPSL.

Positions Lys-16–Leu-162 constitute a PPIase cyclophilin-type domain.

The protein belongs to the cyclophilin-type PPIase family.

The catalysed reaction is [protein]-peptidylproline (omega=180) = [protein]-peptidylproline (omega=0). Functionally, PPIases accelerate the folding of proteins. It catalyzes the cis-trans isomerization of proline imidic peptide bonds in oligopeptides. In Helicobacter pylori (strain J99 / ATCC 700824) (Campylobacter pylori J99), this protein is Peptidyl-prolyl cis-trans isomerase (ppiA).